We begin with the raw amino-acid sequence, 126 residues long: Ribosome-binding factor A (126 aa).

The protein belongs to the RbfA family. In terms of assembly, monomer. Binds 30S ribosomal subunits, but not 50S ribosomal subunits or 70S ribosomes.

Its subcellular location is the cytoplasm. One of several proteins that assist in the late maturation steps of the functional core of the 30S ribosomal subunit. Associates with free 30S ribosomal subunits (but not with 30S subunits that are part of 70S ribosomes or polysomes). Required for efficient processing of 16S rRNA. May interact with the 5'-terminal helix region of 16S rRNA. The polypeptide is Ribosome-binding factor A (Thermosynechococcus vestitus (strain NIES-2133 / IAM M-273 / BP-1)).